The primary structure comprises 758 residues: Vitamin K-dependent gamma-carboxylase (758 aa).

Residues 1-21 form a disordered region; that stretch reads MAVSARSARTSPGSDKVQKDK. Ala-2 carries the N-acetylalanine modification. The Cytoplasmic portion of the chain corresponds to 2–60; that stretch reads AVSARSARTSPGSDKVQKDKAELISGPRQDSLMGKLLGFEWTDLSSWRRLVTLLNRPTD. A helical membrane pass occupies residues 61 to 81; the sequence is PASLAVFRFLFGFLMVLDIPQ. The Lumenal segment spans residues 82-113; sequence ERGLSSLDRKYLDGLDVCRFPLLDALRPLPLD. The cysteines at positions 99 and 450 are disulfide-linked. A helical transmembrane segment spans residues 114–134; it reads WMYLVYTIMFLGALGMMLGLC. Residues 135–136 are Cytoplasmic-facing; it reads YR. Residues 137–157 traverse the membrane as a helical segment; it reads ISCVLFLLPYWYVFLLDKTSW. At 158-292 the chain is on the lumenal side; that stretch reads NNHSYLYGLL…VSYFHCMNSQ (135 aa). A helical transmembrane segment spans residues 293 to 313; the sequence is LFSIGMFSYVMLASSPLFCSP. Over 314 to 361 the chain is Cytoplasmic; the sequence is EWPRKLVSYCPQRLQELLPLKAAPQPSVSCVYKRSRGKSGQKPGLRHQ. Residues 362-382 traverse the membrane as a helical segment; the sequence is LGAAFTLLYLLEQLFLPYSHF. Topologically, residues 383–758 are lumenal; it reads LTQGYNNWTN…SNPDPVHSEF (376 aa). Residues 732-758 form a disordered region; that stretch reads GELSPSNMDSSHSNPPESNPDPVHSEF. The span at 735 to 747 shows a compositional bias: polar residues; it reads SPSNMDSSHSNPP.

The protein belongs to the vitamin K-dependent gamma-carboxylase family. In terms of assembly, monomer. May interact with CALU.

It is found in the endoplasmic reticulum membrane. It catalyses the reaction 4-carboxy-L-glutamyl-[protein] + 2,3-epoxyphylloquinone + H2O + H(+) = phylloquinol + L-glutamyl-[protein] + CO2 + O2. Functionally, mediates the vitamin K-dependent carboxylation of glutamate residues to calcium-binding gamma-carboxyglutamate (Gla) residues with the concomitant conversion of the reduced hydroquinone form of vitamin K to vitamin K epoxide. Catalyzes gamma-carboxylation of various proteins, such as blood coagulation factors (F2, F7, F9 and F10), osteocalcin (BGLAP) or matrix Gla protein (MGP). The protein is Vitamin K-dependent gamma-carboxylase (GGCX) of Pongo abelii (Sumatran orangutan).